Here is a 565-residue protein sequence, read N- to C-terminus: MKTTIILILLTHWVYSQNPTSGNNTATLCLGHHAVANGTLVKTITDDQIEVTNATELVQSTSIGKICNNPYRVLDGRNCTLIDAMLGDPHCDVFQYENWDLFIERSSAFSNCYPYDIPDYASLRSIVASSGTLEFTAEGFTWTGVTQNGGSGACRRGSADSFFSRLNWLTKSGNSYPTLNVTMPNNNNFDKLYIWGIHHPSTNNEQTKLYIQESGRVTVSTKRSQQTIIPNIGSRPWVRGQSGRISIYWTIVKPGDILMINSNGNLVAPRGYFKMRTGKSSVMRSDAPIDTCVSECITPNGSIPNDKPFQNVNKVTYGKCPKYIKQNTLKLATGMRNVPEKQIRGIFGAIAGFIENGWEGMVDGWYGFRYQNSEGTGQAADLKSTQAAIDQINGKLNRVIERTNEKFHQIEKEFSEVEGRIQDLEKYVEDTKIDLWSYNAELLVALENQHTIDLTDAEMNKLFEKTRRQLRENAEDMGGGCFKIYHKCDNACIGSIRNGTYDHYIYRDEALNNRFQIKGVELKSGYKDWILWISFAISCFLICVVLLGFIMWACQKGNIRCNICI.

Residues 1-16 (MKTTIILILLTHWVYS) form the signal peptide. At 17 to 529 (QNPTSGNNTA…VELKSGYKDW (513 aa)) the chain is on the extracellular side. Residues asparagine 23, asparagine 37, asparagine 53, and asparagine 78 are each glycosylated (N-linked (GlcNAc...) asparagine; by host). 6 disulfide bridges follow: cysteine 29–cysteine 481, cysteine 67–cysteine 292, cysteine 79–cysteine 91, cysteine 112–cysteine 154, cysteine 296–cysteine 320, and cysteine 488–cysteine 492. Asparagine 180 and asparagine 300 each carry an N-linked (GlcNAc...) asparagine; by host glycan. N-linked (GlcNAc...) asparagine; by host glycosylation is present at asparagine 498. Residues 530–550 (ILWISFAISCFLICVVLLGFI) form a helical membrane-spanning segment. The Cytoplasmic portion of the chain corresponds to 551–565 (MWACQKGNIRCNICI). 3 S-palmitoyl cysteine; by host lipidation sites follow: cysteine 554, cysteine 561, and cysteine 564.

The protein belongs to the influenza viruses hemagglutinin family. Homotrimer of disulfide-linked HA1-HA2. Palmitoylated. Post-translationally, in natural infection, inactive HA is matured into HA1 and HA2 outside the cell by one or more trypsin-like, arginine-specific endoprotease secreted by the bronchial epithelial cells. One identified protease that may be involved in this process is secreted in lungs by club cells.

It is found in the virion membrane. The protein resides in the host apical cell membrane. Binds to sialic acid-containing receptors on the cell surface, bringing about the attachment of the virus particle to the cell. This attachment induces virion internalization either through clathrin-dependent endocytosis or through clathrin- and caveolin-independent pathway. Plays a major role in the determination of host range restriction and virulence. Class I viral fusion protein. Responsible for penetration of the virus into the cell cytoplasm by mediating the fusion of the membrane of the endocytosed virus particle with the endosomal membrane. Low pH in endosomes induces an irreversible conformational change in HA2, releasing the fusion hydrophobic peptide. Several trimers are required to form a competent fusion pore. The sequence is that of Hemagglutinin from Influenza A virus (strain A/Equine/Kentucky/1/1981).